The sequence spans 455 residues: Notoamide E oxidase notB' (455 aa).

A helical transmembrane segment spans residues 11–31; that stretch reads PAILSPADLTVIIVGLGIAGL. FAD is bound by residues E48 and G61. N75 carries N-linked (GlcNAc...) asparagine glycosylation. Residue R121 coordinates FAD. Residues R199 and Y229 contribute to the active site. The FAD site is built by D324 and G337.

The protein belongs to the paxM FAD-dependent monooxygenase family. The cofactor is FAD.

Its subcellular location is the membrane. The enzyme catalyses notoamide E + NADPH + O2 + H(+) = notoamide C + NADP(+) + H2O. It carries out the reaction notoamide E + NADPH + O2 + H(+) = notoamide D + NADP(+) + H2O. The protein operates within alkaloid biosynthesis. In terms of biological role, FAD-dependent monooxygenase; part of the gene cluster that mediates the biosynthesis of notoamide, a fungal indole alkaloid that belongs to a family of natural products containing a characteristic bicyclo[2.2.2]diazaoctane core. The first step of notoamide biosynthesis involves coupling of L-proline and L-tryptophan by the bimodular NRPS notE', to produce cyclo-L-tryptophan-L-proline called brevianamide F. The reverse prenyltransferase notF' then acts as a deoxybrevianamide E synthase and converts brevianamide F to deoxybrevianamide E via reverse prenylation at C-2 of the indole ring leading to the bicyclo[2.2.2]diazaoctane core. Deoxybrevianamide E is further hydroxylated at C-6 of the indole ring, likely catalyzed by the cytochrome P450 monooxygenase notG', to yield 6-hydroxy-deoxybrevianamide E. 6-hydroxy-deoxybrevianamide E is a specific substrate of the prenyltransferase notC' for normal prenylation at C-7 to produce 6-hydroxy-7-prenyl-deoxybrevianamide, also called notoamide S. As the proposed pivotal branching point in notoamide biosynthesis, notoamide S can be diverted to notoamide E through an oxidative pyran ring closure putatively catalyzed by either notH' cytochrome P450 monooxygenase or the notD' FAD-linked oxidoreductase. This step would be followed by an indole 2,3-epoxidation-initiated pinacol-like rearrangement catalyzed by the notB' FAD-dependent monooxygenase leading to the formation of notoamide C and notoamide D. On the other hand notoamide S is converted to notoamide T by notH' (or notD'), a bifunctional oxidase that also functions as the intramolecular Diels-Alderase responsible for generation of (-)-notoamide T. To generate antipodal (+)-notoaminide T, notH (or notD) in Aspergillus strain MF297-2 is expected to catalyze a Diels-Alder reaction leading to the opposite stereochemistry. The remaining oxidoreductase notD' (or notH') likely catalyzes the oxidative pyran ring formation to yield (-)-stephacidin A. The FAD-dependent monooxygenase notI' is highly similar to notB' and is predicted to catalyze a similar conversion from (-)-stephacidin A to (+)-notoamide B via the 2,3-epoxidation of (-)-stephacidin A followed by a pinacol-type rearrangement. Finally, it remains unclear which enzyme could be responsible for the final hydroxylation steps leading to notoamide A and sclerotiamide. The protein is Notoamide E oxidase notB' of Aspergillus versicolor.